The chain runs to 720 residues: Polyribonucleotide nucleotidyltransferase (720 aa).

Residues Asp-484 and Asp-490 each coordinate Mg(2+). Residues Pro-551 to Ile-610 form the KH domain. The region spanning Gly-620–Arg-688 is the S1 motif domain. Residues Pro-697–Ser-720 are disordered.

This sequence belongs to the polyribonucleotide nucleotidyltransferase family. Requires Mg(2+) as cofactor.

The protein resides in the cytoplasm. It catalyses the reaction RNA(n+1) + phosphate = RNA(n) + a ribonucleoside 5'-diphosphate. Functionally, involved in mRNA degradation. Catalyzes the phosphorolysis of single-stranded polyribonucleotides processively in the 3'- to 5'-direction. The protein is Polyribonucleotide nucleotidyltransferase of Dehalococcoides mccartyi (strain ATCC BAA-2100 / JCM 16839 / KCTC 5957 / BAV1).